A 1482-amino-acid chain; its full sequence is Cystic fibrosis transmembrane conductance regulator (1482 aa).

The Cytoplasmic portion of the chain corresponds to 1-77 (MQRSPLEKAS…KLINALRRCF (77 aa)). A helical membrane pass occupies residues 78–98 (FWRFTFYGIILYLGEVTKAVQ). Positions 81-365 (FTFYGIILYL…WAVQTWYDSL (285 aa)) constitute an ABC transmembrane type-1 1 domain. Over 99–122 (PLLLGRIIASYDPDNKVERSIAIY) the chain is Extracellular. The chain crosses the membrane as a helical span at residues 123–146 (LAVGLCLLFVVRTLLLHPAIFGLH). The Cytoplasmic segment spans residues 147–195 (HIGMQMRIAMFSLIYKKTLKLSSRVLDKISIGQLVSLLSNNLNKFDEGL). Residues 196–216 (ALAHFVWIAPLQVTLLMGLLW) traverse the membrane as a helical segment. Residues 217–222 (DLLQAS) are Extracellular-facing. Residues 223–243 (AFSGLGVLIILACFQAGFGRM) traverse the membrane as a helical segment. Over 244 to 298 (MMKYRDQRAGKINERLVITSEMIENIQSVKAYCWEEALEKMIENFRQSELRLTRK) the chain is Cytoplasmic. A helical transmembrane segment spans residues 299–319 (AAYVRYFNSSAFFFSGFFVVF). Topologically, residues 320 to 339 (LSVLPYALIKGIILRKIFTT) are extracellular. Residues 340–358 (ISFCIVLRMAVTRQFPWAV) form a helical membrane-spanning segment. Residues 359–859 (QTWYDSLGAI…YLRYITVHKR (501 aa)) are Cytoplasmic-facing. ATP-binding positions include tryptophan 401, serine 434, 458–465 (GSTGAGKT), and glutamine 493. An ABC transporter 1 domain is found at 423–646 (NVDNSLFFSN…RPDFSSKLMG (224 aa)). Cysteine 524 carries the S-palmitoyl cysteine lipid modification. Phosphoserine is present on residues serine 549 and serine 660. Residues 654–832 (SAERRNSIIT…EEINEEDLKE (179 aa)) form a disordered R region region. Serine 670 carries the phosphoserine; by PKA modification. Serine 686 is modified (phosphoserine). A Glycyl lysine isopeptide (Lys-Gly) (interchain with G-Cter in ubiquitin) cross-link involves residue lysine 688. Residues serine 700 and serine 712 each carry the phosphoserine modification. Phosphothreonine is present on threonine 717. Residues serine 737, serine 768, serine 796, and serine 814 each carry the phosphoserine modification. A helical membrane pass occupies residues 860 to 880 (LIFVLIWCFVVFLIEVAASLV). An ABC transmembrane type-1 2 domain is found at 860 to 1156 (LIFVLIWCFV…AVNSSIDVDS (297 aa)). The Extracellular portion of the chain corresponds to 881-919 (LLCLLSKVSPEDKGNTTKSANDSSAVIITSTSSFYFLYI). Asparagine 895 and asparagine 901 each carry an N-linked (GlcNAc...) asparagine glycan. A discontinuously helical membrane pass occupies residues 920 to 940 (YVGVADTFLALGLFRGLPLVH). Over 941-991 (TLITVSKILHHKMLHSVLQAPMSTLNTLKAGGILNRFSKDIAILDDLLPLT) the chain is Cytoplasmic. Residues 992–1012 (IFDFIQLLLIVIGAVAVVSIL) form a helical membrane-spanning segment. The Extracellular segment spans residues 1013–1014 (KP). The chain crosses the membrane as a helical span at residues 1015 to 1035 (YIFLATVPVIVAFVLLRAYFL). Residues 1036 to 1096 (HTSQQLKQLE…TANWFLYLST (61 aa)) lie on the Cytoplasmic side of the membrane. Residues 1097 to 1117 (LRWFQMRIEMIFVIFFIAVTF) traverse the membrane as a helical segment. Over 1118–1131 (ISILTTGEGEGTVG) the chain is Extracellular. Residues 1132-1152 (IILTLAMNIMSTLQWAVNSSI) traverse the membrane as a helical segment. Over 1153–1482 (DVDSLMRSVS…TEEEVQDTRL (330 aa)) the chain is Cytoplasmic. Residues 1212–1445 (MTVKDLTAKY…KSLFRQAISP (234 aa)) enclose the ABC transporter 2 domain. Residues tyrosine 1221 and 1246-1253 (GRTGSGKS) contribute to the ATP site. Residues 1388–1482 (RTLKQAFADC…TEEEVQDTRL (95 aa)) are interaction with GORASP2. Cysteine 1397 is lipidated: S-palmitoyl cysteine. Serine 1446 bears the Phosphoserine mark. A disordered region spans residues 1450–1482 (KLFPHQNSGKHKSRSKITALKEETEEEVQDTRL). Positions 1472–1482 (ETEEEVQDTRL) are enriched in acidic residues. Residues 1480–1482 (TRL) carry the PDZ-binding motif.

It belongs to the ABC transporter superfamily. ABCC family. CFTR transporter (TC 3.A.1.202) subfamily. Monomer; does not require oligomerization for channel activity. May form oligomers in the membrane. Interacts with SLC26A3, SLC26A6 and NHERF1. Interacts with SHANK2. Interacts with MYO6. Interacts (via C-terminus) with GOPC (via PDZ domain); this promotes CFTR internalization and thereby decreases channel activity. Interacts with SLC4A7 through NHERF1. Found in a complex with MYO5B and RAB11A. Interacts with ANO1. Interacts with SLC26A8. Interacts with AHCYL1; the interaction increases CFTR activity. Interacts with CSE1L. The core-glycosylated form interacts with GORASP2 (via PDZ GRASP-type 1 domain) in respone to ER stress. Interacts with MARCHF2; the interaction leads to CFTR ubiqtuitination and degradation. Interacts with ADGRG2. In terms of processing, N-glycosylated. Post-translationally, phosphorylated; cAMP treatment promotes phosphorylation and activates the channel. Dephosphorylation decreases the ATPase activity (in vitro). Phosphorylation at PKA sites activates the channel. Phosphorylation at PKC sites enhances the response to phosphorylation by PKA. Phosphorylated by AMPK; this inhibits channel activity. Ubiquitinated, leading to its degradation in the lysosome. Deubiquitination by USP10 in early endosomes enhances its endocytic recycling to the cell membrane. Ubiquitinated by RNF185 during ER stress. Ubiquitinated by MARCHF2.

Its subcellular location is the apical cell membrane. The protein resides in the early endosome membrane. It localises to the cell membrane. It is found in the recycling endosome membrane. The protein localises to the endoplasmic reticulum membrane. Its subcellular location is the nucleus. The enzyme catalyses ATP + H2O + closed Cl(-) channel = ADP + phosphate + open Cl(-) channel.. It catalyses the reaction chloride(in) = chloride(out). It carries out the reaction hydrogencarbonate(in) = hydrogencarbonate(out). The catalysed reaction is ATP + H2O = ADP + phosphate + H(+). Functionally, epithelial ion channel that plays an important role in the regulation of epithelial ion and water transport and fluid homeostasis. Mediates the transport of chloride ions across the cell membrane. Possesses an intrinsic ATPase activity and utilizes ATP to gate its channel; the passive flow of anions through the channel is gated by cycles of ATP binding and hydrolysis by the ATP-binding domains. The ion channel is also permeable to HCO(3)(-); selectivity depends on the extracellular chloride concentration. Exerts its function also by modulating the activity of other ion channels and transporters. Contributes to the regulation of the pH and the ion content of the epithelial fluid layer. Modulates the activity of the epithelial sodium channel (ENaC) complex, in part by regulating the cell surface expression of the ENaC complex. May regulate bicarbonate secretion and salvage in epithelial cells by regulating the transporter SLC4A7. Can inhibit the chloride channel activity of ANO1. Plays a role in the chloride and bicarbonate homeostasis during sperm epididymal maturation and capacitation. In Dasypus novemcinctus (Nine-banded armadillo), this protein is Cystic fibrosis transmembrane conductance regulator.